The sequence spans 434 residues: Nicotinate phosphoribosyltransferase (434 aa).

His242 carries the phosphohistidine; by autocatalysis modification.

It belongs to the NAPRTase family. Transiently phosphorylated on a His residue during the reaction cycle. Phosphorylation strongly increases the affinity for substrates and increases the rate of nicotinate D-ribonucleotide production. Dephosphorylation regenerates the low-affinity form of the enzyme, leading to product release.

It catalyses the reaction nicotinate + 5-phospho-alpha-D-ribose 1-diphosphate + ATP + H2O = nicotinate beta-D-ribonucleotide + ADP + phosphate + diphosphate. Its pathway is cofactor biosynthesis; NAD(+) biosynthesis; nicotinate D-ribonucleotide from nicotinate: step 1/1. Catalyzes the synthesis of beta-nicotinate D-ribonucleotide from nicotinate and 5-phospho-D-ribose 1-phosphate at the expense of ATP. This chain is Nicotinate phosphoribosyltransferase, found in Mesorhizobium japonicum (strain LMG 29417 / CECT 9101 / MAFF 303099) (Mesorhizobium loti (strain MAFF 303099)).